Consider the following 419-residue polypeptide: Light-independent protochlorophyllide reductase subunit N (419 aa).

[4Fe-4S] cluster is bound by residues Cys20, Cys45, and Cys102.

Belongs to the BchN/ChlN family. As to quaternary structure, protochlorophyllide reductase is composed of three subunits; BchL, BchN and BchB. Forms a heterotetramer of two BchB and two BchN subunits. [4Fe-4S] cluster serves as cofactor.

It catalyses the reaction chlorophyllide a + oxidized 2[4Fe-4S]-[ferredoxin] + 2 ADP + 2 phosphate = protochlorophyllide a + reduced 2[4Fe-4S]-[ferredoxin] + 2 ATP + 2 H2O. Its pathway is porphyrin-containing compound metabolism; bacteriochlorophyll biosynthesis (light-independent). In terms of biological role, component of the dark-operative protochlorophyllide reductase (DPOR) that uses Mg-ATP and reduced ferredoxin to reduce ring D of protochlorophyllide (Pchlide) to form chlorophyllide a (Chlide). This reaction is light-independent. The NB-protein (BchN-BchB) is the catalytic component of the complex. The sequence is that of Light-independent protochlorophyllide reductase subunit N from Chlorobaculum tepidum (strain ATCC 49652 / DSM 12025 / NBRC 103806 / TLS) (Chlorobium tepidum).